We begin with the raw amino-acid sequence, 205 residues long: Probable peptidyl-tRNA hydrolase 2 (205 aa).

Residues 40–49 show a composition bias toward polar residues; it reads YSSKNANKAS. The disordered stretch occupies residues 40-68; the sequence is YSSKNANKASNPEKESPVSVSNDEDSESE. Phosphoserine is present on residues Ser65 and Ser79.

The protein belongs to the PTH2 family.

It carries out the reaction an N-acyl-L-alpha-aminoacyl-tRNA + H2O = an N-acyl-L-amino acid + a tRNA + H(+). In terms of biological role, the natural substrate for this enzyme may be peptidyl-tRNAs which drop off the ribosome during protein synthesis. This Schizosaccharomyces pombe (strain 972 / ATCC 24843) (Fission yeast) protein is Probable peptidyl-tRNA hydrolase 2.